Here is an 864-residue protein sequence, read N- to C-terminus: Receptor like protein 24 (864 aa).

An N-terminal signal peptide occupies residues 1–29; that stretch reads MKTVFKSLLLLHFLLLLLLCFVSPSSFFL. Residues 30-830 lie on the Extracellular side of the membrane; that stretch reads LKVPVGGLVA…EEKGEVINWK (801 aa). N-linked (GlcNAc...) asparagine glycosylation is found at asparagine 61, asparagine 73, asparagine 94, and asparagine 112. LRR repeat units lie at residues 100–125, 127–148, 156–182, 183–205, 207–229, 230–253, 254–277, 279–303, 305–326, 327–350, 351–376, 378–398, 399–423, 425–448, and 449–472; these read FHQL…FCNL, KLKL…DLMG, LGKL…LFEL, HSLR…KFGN, NKLE…TISN, LTRI…VQNL, TKLS…LFTF, SLST…STSS, LEIM…ISKL, INLK…LLSP, LKSL…SYIP, SMES…ILKH, LQNL…LWTL, QLSF…VFVN, and LSVR…PLSI. 4 N-linked (GlcNAc...) asparagine glycosylation sites follow: asparagine 176, asparagine 194, asparagine 229, and asparagine 252. The N-linked (GlcNAc...) asparagine glycan is linked to asparagine 298. Residue asparagine 338 is glycosylated (N-linked (GlcNAc...) asparagine). 2 N-linked (GlcNAc...) asparagine glycosylation sites follow: asparagine 433 and asparagine 448. The LRR 16; degenerate repeat unit spans residues 473–492; sequence IGFSAIHNSFTGEIPLSICN. Asparagine 492 and asparagine 505 each carry an N-linked (GlcNAc...) asparagine glycan. LRR repeat units lie at residues 493–514, 515–538, 539–562, 564–585, 586–610, 613–637, 688–712, 713–735, 736–760, and 762–785; these read RTSL…PQCL, SNFM…FYTD, SSLK…LLNC, SLRF…WLKA, LPNL…HQGP, FPEL…FFVN, LTSY…IGLL, KALI…SFAN, LMNL…LGSL, and FLVY…QITG. An N-linked (GlcNAc...) asparagine glycan is attached at asparagine 561. The N-linked (GlcNAc...) asparagine glycan is linked to asparagine 719. Residues 831 to 851 form a helical membrane-spanning segment; that stretch reads AVAIGYAPGLLFGLAIAHLIA. At 852–864 the chain is on the cytoplasmic side; it reads SYKPEWLVKIIGF.

Belongs to the RLP family.

It is found in the cell membrane. The sequence is that of Receptor like protein 24 from Arabidopsis thaliana (Mouse-ear cress).